The following is a 141-amino-acid chain: ATP synthase F(0) complex subunit C2, mitochondrial (141 aa).

Residues 1-66 (MFACSKFVST…RSFQTSAISR (66 aa)) constitute a mitochondrion transit peptide. A helical transmembrane segment spans residues 82–102 (VGVAGSGAGIGTVFGSLIIGY). An N6,N6,N6-trimethyllysine modification is found at Lys-109. Residues 117–137 (ILGFALSEAMGLFCLMVAFLI) form a helical membrane-spanning segment.

It belongs to the ATPase C chain family. As to quaternary structure, F-type ATPases have 2 components, CF(1) - the catalytic core - and CF(0) - the membrane proton channel. CF(1) has five subunits: alpha(3), beta(3), gamma(1), delta(1), epsilon(1). CF(0) has three main subunits: a, b and c. Interacts with DNAJC30; interaction is direct. Trimethylated by ATPSCKMT at Lys-109. Methylation is required for proper incorporation of the C subunit into the ATP synthase complex and mitochondrial respiration.

The protein localises to the mitochondrion membrane. Its function is as follows. Mitochondrial membrane ATP synthase (F(1)F(0) ATP synthase or Complex V) produces ATP from ADP in the presence of a proton gradient across the membrane which is generated by electron transport complexes of the respiratory chain. F-type ATPases consist of two structural domains, F(1) - containing the extramembraneous catalytic core and F(0) - containing the membrane proton channel, linked together by a central stalk and a peripheral stalk. During catalysis, ATP synthesis in the catalytic domain of F(1) is coupled via a rotary mechanism of the central stalk subunits to proton translocation. Part of the complex F(0) domain. A homomeric c-ring of probably 10 subunits is part of the complex rotary element. This chain is ATP synthase F(0) complex subunit C2, mitochondrial, found in Homo sapiens (Human).